Consider the following 122-residue polypeptide: Large ribosomal subunit protein uL14 (122 aa).

This sequence belongs to the universal ribosomal protein uL14 family. Part of the 50S ribosomal subunit. Forms a cluster with proteins L3 and L19. In the 70S ribosome, L14 and L19 interact and together make contacts with the 16S rRNA in bridges B5 and B8.

Its function is as follows. Binds to 23S rRNA. Forms part of two intersubunit bridges in the 70S ribosome. This chain is Large ribosomal subunit protein uL14, found in Lactobacillus delbrueckii subsp. bulgaricus (strain ATCC 11842 / DSM 20081 / BCRC 10696 / JCM 1002 / NBRC 13953 / NCIMB 11778 / NCTC 12712 / WDCM 00102 / Lb 14).